The sequence spans 422 residues: Keratan-sulfate endo-1,4-beta-galactosidase (422 aa).

An N-terminal signal peptide occupies residues 1 to 46; sequence MRKTKFWLVLSLIATSLSIFACKKDSTATKNPIPEVSKAKASTKLL. The region spanning 47 to 292 is the GH16 domain; that stretch reads NATTVATTDY…YVRVYKLPLF (246 aa). Glu-171 acts as the Nucleophile in catalysis. Glu-176 functions as the Proton donor in the catalytic mechanism. The CBM-cenC domain occupies 291 to 406; that stretch reads LFSNGDFESG…NTTATVYFYK (116 aa).

It belongs to the glycosyl hydrolase 16 family.

It is found in the secreted. The catalysed reaction is Endohydrolysis of (1-&gt;4)-beta-D-galactosidic linkages in keratan sulfate.. Hydrolyzes internal endo-beta-galactosyl linkages in keratan sulfate and in various neolacto-type glycosphingolipids, producing sulfated and non-sulfated disaccharides, and glucosylceramides respectivly. The protein is Keratan-sulfate endo-1,4-beta-galactosidase of Sphingobacterium multivorum.